The sequence spans 150 residues: Major facilitator superfamily domain-containing 14C pseudogene (150 aa).

The segment at 1 to 25 (MSVEPPPELEEKAASEPEAGAMPEK) is disordered. The Extracellular segment spans residues 1–49 (MSVEPPPELEEKAASEPEAGAMPEKRAGAQAAGSTWLQGFGPPSVYHAA). A helical transmembrane segment spans residues 50–70 (IVIFLEFFAWGLLTTPMLTVL). Residues 71 to 82 (HETFSQHTFLMN) lie on the Cytoplasmic side of the membrane. The helical transmembrane segment at 83-103 (GLIQGVKGLLSFLSAPLIGAL) threads the bilayer. Over 104 to 111 (SDVWGRKP) the chain is Extracellular. Residues 112-132 (FLLGTVFFTCFPIPLMRISPC) traverse the membrane as a helical segment. Residues 133–150 (RVWWRAPVVPATCGRRMA) lie on the Cytoplasmic side of the membrane.

Belongs to the major facilitator superfamily.

Its subcellular location is the membrane. This Homo sapiens (Human) protein is Major facilitator superfamily domain-containing 14C pseudogene.